The chain runs to 334 residues: MSEPIRVLVTGAAGQIAYSLLYSIGNGSVFGKDQPIILVLLDITPMMGVLDGVLMELQDCALPLLKDVIATDKEDVAFKDLDVAILVGSMPRREGMERKDLLKANVKIFKSQGAALDKYAKKSVKVIVVGNPANTNCLTASKSAPSIPKENFSCLTRLDHNRAKAQIALKLGVTANDVKNVIIWGNHSSTQYPDVNHAKVKLQGKEVGVYEALKDDSWLKGEFVTTVQQRGAAVIKARKLSSAMSAAKAICDHVRDIWFGTPEGEFVSMGVISDGNSYGVPDDLLYSFPVVIKNKTWKFVEGLPINDFSREKMDLTAKELTEEKESAFEFLSSA.

N-acetylserine is present on Ser2. NAD(+) contacts are provided by residues 11-17 (GAAGQIA) and Asp42. Positions 92 and 98 each coordinate substrate. Asn105 lines the NAD(+) pocket. Lys110 carries the N6-succinyllysine modification. Gln112 lines the NAD(+) pocket. N6-acetyllysine is present on residues Lys118 and Lys121. 129–131 (VGN) contributes to the NAD(+) binding site. Residues Asn131 and Arg162 each coordinate substrate. The active-site Proton acceptor is the His187. Lys214 bears the N6-succinyllysine mark. Residue Ser217 is modified to Phosphoserine. At Arg230 the chain carries Omega-N-methylarginine. At Ser241 the chain carries Phosphoserine. Lys298 carries the N6-acetyllysine; alternate modification. N6-succinyllysine; alternate is present on Lys298. Ser309 carries the phosphoserine modification. The residue at position 318 (Lys318) is an N6-succinyllysine. Residues Ser332 and Ser333 each carry the phosphoserine modification.

Belongs to the LDH/MDH superfamily. MDH type 2 family. As to quaternary structure, homodimer. ISGylated. In terms of processing, acetylation at Lys-118 dramatically enhances enzymatic activity and promotes adipogenic differentiation.

It is found in the cytoplasm. The protein resides in the cytosol. It catalyses the reaction (S)-malate + NAD(+) = oxaloacetate + NADH + H(+). The enzyme catalyses (2R)-2-hydroxy-3-(4-hydroxyphenyl)propanoate + NAD(+) = 3-(4-hydroxyphenyl)pyruvate + NADH + H(+). It carries out the reaction (S)-2-hydroxyglutarate + NAD(+) = 2-oxoglutarate + NADH + H(+). Catalyzes the reduction of aromatic alpha-keto acids in the presence of NADH. Plays essential roles in the malate-aspartate shuttle and the tricarboxylic acid cycle, important in mitochondrial NADH supply for oxidative phosphorylation. Catalyzes the reduction of 2-oxoglutarate to 2-hydroxyglutarate, leading to elevated reactive oxygen species (ROS). The polypeptide is Malate dehydrogenase, cytoplasmic (Homo sapiens (Human)).